Reading from the N-terminus, the 231-residue chain is Aquaporin Z (231 aa).

2 helical membrane-spanning segments follow: residues 11–31 (FLGT…AAAF) and 36–56 (IGLL…AFAI). Residues 65-67 (NPA) carry the NPA 1 motif. 3 helical membrane passes run 84 to 104 (LPYI…LYLI), 132 to 152 (MISV…VILG), and 161 to 181 (GFAP…SIPI). An NPA 2 motif is present at residues 187–189 (NPA). A helical membrane pass occupies residues 203-223 (VSQLWLFWAAPIIGAILAGVI).

This sequence belongs to the MIP/aquaporin (TC 1.A.8) family. As to quaternary structure, homotetramer.

It is found in the cell inner membrane. It catalyses the reaction H2O(in) = H2O(out). Functionally, channel that permits osmotically driven movement of water in both directions. It is involved in the osmoregulation and in the maintenance of cell turgor during volume expansion in rapidly growing cells. It mediates rapid entry or exit of water in response to abrupt changes in osmolarity. This chain is Aquaporin Z, found in Shewanella oneidensis (strain ATCC 700550 / JCM 31522 / CIP 106686 / LMG 19005 / NCIMB 14063 / MR-1).